Reading from the N-terminus, the 633-residue chain is MDNLFGKMFYLIKQIGTDQYPMYLIIDRLNIISFLNEKKKTTLTLVEPDYSNPFFKIVKHNDKQTYLTNYIIKYEQCDLLDISNIDYILDTNKMPQYTCRLFRFFIANDRYDICDYLIHNRGIKYNYESIPSILHILDDEKEPALLEYIIANIDYFDIDLTFIIRHVLLFFNKDTQYFLDKINSLAQTKGIEISNKDYCDIANDLIESYDPDIESIKLFLDMGYINGNQIFIIACNFFSDLVKYLVEQNVNYDINDVLKINVSANILEYFHQKGHVFTDENIRDIMINLTEFEDIEKIKYMCSEKILCQEHIDSDFLTQLINKNFTNYLEILISEFDIRELIDIDCLMKKAISLDSPEIVNYCIQNGIDVENYLGLVFEHSSQKLLNMLMASGIEVPEKLSLLGLKSFENMDFVNVYINEYNYNLPYMFKMTLKNGTLKTFKYVIDTMIQKQQPIPDFVKLLVKYTLDKNMYTQKKNKEIVNCLINLDIEYNPLQQTLIALIKKDSNRVKNLIHENILYRSLVVLFMTVLTKNIDVLTLLLEKNTDEKYIKWASIFSVCDYETFRFVIEHTGVDIQRYQEEIILMSGICYNYNNYRYLKLMGFPDIYTAKKTIDKNGPVKYFVEFMKQYDISV.

This is an uncharacterized protein from Acanthamoeba polyphaga mimivirus (APMV).